A 189-amino-acid polypeptide reads, in one-letter code: Peptidyl-tRNA hydrolase (189 aa).

Tyr-15 contacts tRNA. His-20 serves as the catalytic Proton acceptor. Residues Phe-66, Asn-68, and Asn-114 each contribute to the tRNA site.

It belongs to the PTH family. Monomer.

It is found in the cytoplasm. It catalyses the reaction an N-acyl-L-alpha-aminoacyl-tRNA + H2O = an N-acyl-L-amino acid + a tRNA + H(+). Its function is as follows. Hydrolyzes ribosome-free peptidyl-tRNAs (with 1 or more amino acids incorporated), which drop off the ribosome during protein synthesis, or as a result of ribosome stalling. Functionally, catalyzes the release of premature peptidyl moieties from peptidyl-tRNA molecules trapped in stalled 50S ribosomal subunits, and thus maintains levels of free tRNAs and 50S ribosomes. The protein is Peptidyl-tRNA hydrolase of Streptococcus thermophilus (strain CNRZ 1066).